The chain runs to 308 residues: Phosphatidate cytidylyltransferase (308 aa).

A run of 8 helical transmembrane segments spans residues Phe-30 to Ile-50, Pro-73 to Ile-93, Pro-100 to Phe-120, Ile-127 to Ile-147, Ile-167 to Phe-187, Thr-205 to Leu-225, Phe-235 to Gly-255, and Met-280 to Ile-300.

It belongs to the CDS family.

The protein localises to the cell membrane. It catalyses the reaction a 1,2-diacyl-sn-glycero-3-phosphate + CTP + H(+) = a CDP-1,2-diacyl-sn-glycerol + diphosphate. The protein operates within phospholipid metabolism; CDP-diacylglycerol biosynthesis; CDP-diacylglycerol from sn-glycerol 3-phosphate: step 3/3. The chain is Phosphatidate cytidylyltransferase (cdsA) from Chlamydia pneumoniae (Chlamydophila pneumoniae).